The sequence spans 100 residues: Apolipoprotein C-II (100 aa).

An N-terminal signal peptide occupies residues 1–22; sequence MDSRFLLALFLVLLVLGCEVQA. A lipid binding region spans residues 66 to 74; it reads SVDEKLRDM. Residues 78 to 100 form a lipoprotein lipase cofactor region; sequence SSAAMTTYAIIFTDQILTLLKGE.

This sequence belongs to the apolipoprotein C2 family. Proapolipoprotein C-II is synthesized as a sialic acid containing glycoprotein which is subsequently desialylated prior to its proteolytic processing. In terms of processing, proapolipoprotein C-II, the major form found in plasma undergoes proteolytic cleavage of its N-terminal hexapeptide to generate the mature form apolipoprotein C-II, which occurs as the minor form in plasma.

The protein resides in the secreted. In terms of biological role, component of chylomicrons, very low-density lipoproteins (VLDL), low-density lipoproteins (LDL), and high-density lipoproteins (HDL) in plasma. Plays an important role in lipoprotein metabolism as an activator of lipoprotein lipase. In Myodes glareolus (Bank vole), this protein is Apolipoprotein C-II (APOC2).